The following is a 220-amino-acid chain: MLSVILKSSVRGLGKAGEIAKVRPGYARYLLADGKAVRATKDNVALLEQKLALIEEENSKKLAEAEGVAKSLGAERLIIVRQSSDDGKLFGSVTVRDVSKLLCDLGYDIQPRCVSFSEVIKRTGEYEINVELHADLVATLRLHVVRNESEAERVRLGIAKSEDQAAAAAEVEQAEDVAAAEQQDSSPVDDHADDADGVADGEGRDEGAGDASDEEEMPST.

Over residues 167 to 184 the composition is skewed to low complexity; sequence AAAEVEQAEDVAAAEQQD. Residues 167–220 form a disordered region; that stretch reads AAAEVEQAEDVAAAEQQDSSPVDDHADDADGVADGEGRDEGAGDASDEEEMPST. Over residues 211–220 the composition is skewed to acidic residues; it reads ASDEEEMPST.

The protein belongs to the bacterial ribosomal protein bL9 family.

Functionally, binds to the 23S rRNA. The protein is Large ribosomal subunit protein bL9 of Anaplasma marginale (strain Florida).